A 72-amino-acid polypeptide reads, in one-letter code: Prokaryotic ubiquitin-like protein Pup (72 aa).

Residues 1 to 10 show a composition bias toward gly residues; the sequence is MATRDSGGGQ. The segment at 1 to 41 is disordered; sequence MATRDSGGGQQHTNRHADEVEEVAAEGNDASDLKERHEKLS. The stretch at 21–61 forms a coiled coil; it reads EEVAAEGNDASDLKERHEKLSEDVDSLLDEIDDVLEENAEE. An ARC ATPase binding region spans residues 28 to 66; it reads NDASDLKERHEKLSEDVDSLLDEIDDVLEENAEEFVKGY. The span at 31–41 shows a compositional bias: basic and acidic residues; sequence SDLKERHEKLS. An Isoglutamyl lysine isopeptide (Glu-Lys) (interchain with K-? in acceptor proteins) cross-link involves residue Glu72.

This sequence belongs to the prokaryotic ubiquitin-like protein family. In terms of assembly, strongly interacts with the proteasome-associated ATPase ARC through a hydrophobic interface; the interacting region of Pup lies in its C-terminal half. There is one Pup binding site per ARC hexamer ring.

It functions in the pathway protein degradation; proteasomal Pup-dependent pathway. Protein modifier that is covalently attached to lysine residues of substrate proteins, thereby targeting them for proteasomal degradation. The tagging system is termed pupylation. The chain is Prokaryotic ubiquitin-like protein Pup from Frankia alni (strain DSM 45986 / CECT 9034 / ACN14a).